Reading from the N-terminus, the 72-residue chain is SRY-related protein ADW5 (72 aa).

Residues 1 to 69 constitute a DNA-binding region (HMG box); it reads VKRPMNAFMV…KHMADYPDYK (69 aa).

It localises to the nucleus. This is SRY-related protein ADW5 from Alligator mississippiensis (American alligator).